Reading from the N-terminus, the 694-residue chain is Elongation factor G (694 aa).

Residues 8–282 form the tr-type G domain; sequence KDYRNIGIMA…AVIDYLPSPV (275 aa). Residues 17–24, 81–85, and 135–138 contribute to the GTP site; these read AHIDAGKT, DTPGH, and NKMD.

This sequence belongs to the TRAFAC class translation factor GTPase superfamily. Classic translation factor GTPase family. EF-G/EF-2 subfamily.

It is found in the cytoplasm. Functionally, catalyzes the GTP-dependent ribosomal translocation step during translation elongation. During this step, the ribosome changes from the pre-translocational (PRE) to the post-translocational (POST) state as the newly formed A-site-bound peptidyl-tRNA and P-site-bound deacylated tRNA move to the P and E sites, respectively. Catalyzes the coordinated movement of the two tRNA molecules, the mRNA and conformational changes in the ribosome. The sequence is that of Elongation factor G from Mesomycoplasma hyopneumoniae (strain J / ATCC 25934 / NCTC 10110) (Mycoplasma hyopneumoniae).